A 449-amino-acid polypeptide reads, in one-letter code: Adenylosuccinate synthetase (449 aa).

GTP-binding positions include 37-43 and 65-67; these read GDEGKGK and GHT. The active-site Proton acceptor is the aspartate 38. Positions 38 and 65 each coordinate Mg(2+). Residues 38-41, 63-66, threonine 155, arginine 169, asparagine 247, threonine 262, and arginine 326 contribute to the IMP site; these read DEGK and NAGH. Histidine 66 functions as the Proton donor in the catalytic mechanism. 322–328 contacts substrate; that stretch reads VTTKRKR. Residues arginine 328, 354 to 356, and 437 to 439 contribute to the GTP site; these read KLD and GVG.

It belongs to the adenylosuccinate synthetase family. Homodimer. Mg(2+) is required as a cofactor.

It is found in the cytoplasm. The enzyme catalyses IMP + L-aspartate + GTP = N(6)-(1,2-dicarboxyethyl)-AMP + GDP + phosphate + 2 H(+). Its pathway is purine metabolism; AMP biosynthesis via de novo pathway; AMP from IMP: step 1/2. Functionally, plays an important role in the de novo pathway and in the salvage pathway of purine nucleotide biosynthesis. Catalyzes the first committed step in the biosynthesis of AMP from IMP. In Drosophila willistoni (Fruit fly), this protein is Adenylosuccinate synthetase.